The following is a 56-amino-acid chain: uncharacterized protein (56 aa).

Residues 30 to 52 (IKIGIICVIITWAIFSINHHHTI) form a helical membrane-spanning segment.

It is found in the membrane. This is an uncharacterized protein from Dictyostelium discoideum (Social amoeba).